A 570-amino-acid polypeptide reads, in one-letter code: Methionine--tRNA ligase (570 aa).

The 'HIGH' region motif lies at 11 to 21 (PYVQTVPHLGN). Residues C143, C146, C156, and C159 each contribute to the Zn(2+) site. The 'KMSKS' region signature appears at 333 to 337 (KFSKS). K336 contributes to the ATP binding site.

This sequence belongs to the class-I aminoacyl-tRNA synthetase family. MetG type 1 subfamily. It depends on Zn(2+) as a cofactor.

The protein resides in the cytoplasm. The catalysed reaction is tRNA(Met) + L-methionine + ATP = L-methionyl-tRNA(Met) + AMP + diphosphate. In terms of biological role, is required not only for elongation of protein synthesis but also for the initiation of all mRNA translation through initiator tRNA(fMet) aminoacylation. This is Methionine--tRNA ligase from Pyrobaculum calidifontis (strain DSM 21063 / JCM 11548 / VA1).